The primary structure comprises 150 residues: Sulfur-rich protein, serovar D (150 aa).

Transmembrane regions (helical) follow at residues 41–61 (VGLV…LVSA) and 67–87 (AIYL…VGIL).

It localises to the membrane. In Chlamydia trachomatis serovar D (strain ATCC VR-885 / DSM 19411 / UW-3/Cx), this protein is Sulfur-rich protein, serovar D (srp).